Consider the following 371-residue polypeptide: MSQDKKTPLYETHRTLGAKMIPFGGWDMPVQYSGIIAEHNATREAAGLFDVSHMGEIFITGNPKSILLFLESITCNSVASLSDFQVQYNAILNQNGGLVDDVTIYKFSSEKYMICSNASNYEAVTEHLLEHLPISGVKVDNQSLQWHQIALQGPKANEIFSKFLKRDLDSIQYYRFMLLPYQGEEIIVSRTGYTGEDGFEIYSSIPIGLKLWNELLEFGKPYGLLPCGLGARDTLRIEAKYPLYGHELNDQWTPIESGIGWIVKEKENPYFSSEKILFQKKNGVPSKIVSFALTEAGVPRENFRVLDSQGNEIGKTTSGTFSPSLKKGIGLALIQSEKIKDGEPIQIEIREQPKQAIITMKPFIPGSIRKN.

This sequence belongs to the GcvT family. In terms of assembly, the glycine cleavage system is composed of four proteins: P, T, L and H.

The enzyme catalyses N(6)-[(R)-S(8)-aminomethyldihydrolipoyl]-L-lysyl-[protein] + (6S)-5,6,7,8-tetrahydrofolate = N(6)-[(R)-dihydrolipoyl]-L-lysyl-[protein] + (6R)-5,10-methylene-5,6,7,8-tetrahydrofolate + NH4(+). Functionally, the glycine cleavage system catalyzes the degradation of glycine. The chain is Aminomethyltransferase from Leptospira interrogans serogroup Icterohaemorrhagiae serovar Lai (strain 56601).